Here is a 443-residue protein sequence, read N- to C-terminus: MDLALFFRNEVKPALGCTEPGAVAYAASIAARHCPGEPLSVALSLSLSMFKNGRDVGIPGTGGLRGNRLAAVLGVLAGDADKGLMALEHIDMAVVERAQTLLDAGMVTEEVVDGVPGVYAAVTLRCAGHEVTVTVAGRHDRVASIVVDGEVVGGEGMERAPEADGTLHGGASCEPSASFTEPPLPAYLEELRECDFAQLWDMAAGIDATLEQELLRGAAMNMAVARMGLESGWGLGVGHTLAAHAEAADLHARIRFMAGAAADVRMAGAPQPVMSSAGSGNHGITATVPVAVAAEGLGVSPRVQAEALALSHLVTGYLKAHTGRLTPICGCSVAAGAGAAAGIVKVLGGNAVQAERAVASLMASLMGMLCDGAKGSCGLKVATAAGEAYAAALLGMDDRGVQRPEGVVNPDIATTARALARLSREGFAAADAVMVELLGGGKH.

Residues 156–178 (GMERAPEADGTLHGGASCEPSAS) are disordered.

This sequence belongs to the UPF0597 family.

In Nitratidesulfovibrio vulgaris (strain DP4) (Desulfovibrio vulgaris), this protein is UPF0597 protein Dvul_2496.